Reading from the N-terminus, the 257-residue chain is MDAEYSGNEFPRSEGERDQHQRPGKERKSGEAGWGTGELGQDGRLLSSTLSLSSNRSLGQRQNSPLPFQWRITHSFRWMAQVLASELSLVAFILLLVVAFSKKWLDLSRSLFYQRWPVDVSNRIHTSAHVMSMGLLHFYKSRSCSDLENGKVTFIFSTLMLFPINIWIFELERNVSIPIGWSYFIGWLVLILYFTCAILCYFNHKSFWSLILSHPSGAVSCSSSFGSVEESPRAQTITDTPITQEGVLDPEQKDTHV.

Residues Met1–Gln41 are disordered. Over residues Pro11 to Gly30 the composition is skewed to basic and acidic residues. Phosphoserine is present on Ser64. Transmembrane regions (helical) follow at residues Ala80–Phe100, Val152–Glu172, and Ile179–Leu199.

Expressed in testis and sperm; especially localized to sperm tail (at protein level).

The protein resides in the membrane. Component of the outer dense fibers (ODF) of spermatozoa which could be involved in sperm tail structure, sperm movement and general organization of cellular cytoskeleton. The chain is Outer dense fiber protein 4 (ODF4) from Homo sapiens (Human).